The sequence spans 471 residues: Glutamate--tRNA ligase (471 aa).

The short motif at 9–19 (PSPTGYLHVGG) is the 'HIGH' region element. The Zn(2+) site is built by cysteine 98, cysteine 100, cysteine 125, and histidine 127. Positions 237–241 (KLSKR) match the 'KMSKS' region motif. Residue lysine 240 coordinates ATP.

It belongs to the class-I aminoacyl-tRNA synthetase family. Glutamate--tRNA ligase type 1 subfamily. Monomer. The cofactor is Zn(2+).

It localises to the cytoplasm. The enzyme catalyses tRNA(Glu) + L-glutamate + ATP = L-glutamyl-tRNA(Glu) + AMP + diphosphate. Catalyzes the attachment of glutamate to tRNA(Glu) in a two-step reaction: glutamate is first activated by ATP to form Glu-AMP and then transferred to the acceptor end of tRNA(Glu). This is Glutamate--tRNA ligase from Shigella boydii serotype 18 (strain CDC 3083-94 / BS512).